The primary structure comprises 265 residues: Lipopolysaccharide core heptose(I) kinase WaaP (265 aa).

The active site involves aspartate 162.

The protein belongs to the protein kinase superfamily. KdkA/RfaP family. It depends on Mg(2+) as a cofactor.

The enzyme catalyses an L-alpha-D-Hep-(1-&gt;3)-L-alpha-D-Hep-(1-&gt;5)-[alpha-Kdo-(2-&gt;4)]-alpha-Kdo-(2-&gt;6)-lipid A + ATP = an L-alpha-D-Hep-(1-&gt;3)-4-O-phospho-L-alpha-D-Hep-(1-&gt;5)-[alpha-Kdo-(2-&gt;4)]-alpha-Kdo-(2-&gt;6)-lipid A + ADP + H(+). It catalyses the reaction L-alpha-D-Hep-(1-&gt;3)-L-alpha-D-Hep-(1-&gt;5)-[alpha-Kdo-(2-&gt;4)]-alpha-Kdo-(2-&gt;6)-lipid A (E. coli) + ATP = L-alpha-D-Hep-(1-&gt;3)-4-O-phospho-L-alpha-D-Hep-(1-&gt;5)-[alpha-Kdo-(2-&gt;4)]-alpha-Kdo-(2-&gt;6)-lipid A (E. coli) + ADP + H(+). The protein operates within bacterial outer membrane biogenesis; LPS core biosynthesis. In terms of biological role, kinase involved in the biosynthesis of the core oligosaccharide region of lipopolysaccharide (LPS). Catalyzes the phosphorylation of heptose I (HepI), the first heptose added to the Kdo2-lipid A module. This Escherichia coli (strain K12) protein is Lipopolysaccharide core heptose(I) kinase WaaP.